We begin with the raw amino-acid sequence, 748 residues long: MTTEAKCPFNHAVVGTGTTNRDWWPKQLRVDLLSQHSSKSNPLGQSFNYADAFKRLDLQALKRDLHALMTDSQDWWPADFGHYGPLFVRMAWHSAGTYRIGDGRGGGGRGQQRFAPLNSWPDNVSLDKARRLLWPIKQKYGQAISWADLMILTGNVALESMGLKTFGFAGGREDTWEPDQDLYWGRETKWLGGDDRYSRGSPGVDEAHGVLVKDDDSQVPHTRDLENPLAAVQMGLIYVNPEGPDGNPDPIASARDIRDTFARMAMNDEETVALIAGGHTFGKTHGAGPADNVGAEPEAGELESQGLGWHNRYGSGKGADTITSGLEVTWTTTPAQWSNDYFDHLFGFEWELSKSPAGAHQWVAKNADAIIPDAHDASRKHRPTMLTTDLALRFDPAYEAISRRFQQHPEQFADAFARAWFKLTHRDMGPRSRYLGADVPAEELVWQDPVPAVDHPLVDAQDAAALKQTILASGLSVAHLVSTAWASATTFRGSDKRGGANGARIRLAPQKDWQANQPEQLAKVLATLERIQADFNAAQSGGKKISLADLIVLAGNAAVEHAAQAAGHQVTVPFAPGRTDASQQQTDVESFAVLEPVADGFRNFAKRRYAVPAEALLIDKAQLLTLTAPELTVLVGGLRVLGANVGDSKHGVFTSRPGVLSNDFFANLLDMRTEWKATSEAKDEYEGRDRSTGELRWTGTRVDLVFGSNSILRAVAEVYASADAQEKFVHDFVAAWTKVMQLDRFDLA.

The tryptophyl-tyrosyl-methioninium (Trp-Tyr) (with M-264) cross-link spans 92–238 (WHSAGTYRIG…LAAVQMGLIY (147 aa)). His-93 functions as the Proton acceptor in the catalytic mechanism. Positions 238-264 (YVNPEGPDGNPDPIASARDIRDTFARM) form a cross-link, tryptophyl-tyrosyl-methioninium (Tyr-Met) (with W-92). His-279 serves as a coordination point for heme b.

It belongs to the peroxidase family. Peroxidase/catalase subfamily. Homodimer or homotetramer. It depends on heme b as a cofactor. In terms of processing, formation of the three residue Trp-Tyr-Met cross-link is important for the catalase, but not the peroxidase activity of the enzyme.

It carries out the reaction H2O2 + AH2 = A + 2 H2O. It catalyses the reaction 2 H2O2 = O2 + 2 H2O. Its function is as follows. Bifunctional enzyme with both catalase and broad-spectrum peroxidase activity. The polypeptide is Catalase-peroxidase (Xanthomonas euvesicatoria pv. vesicatoria (strain 85-10) (Xanthomonas campestris pv. vesicatoria)).